The chain runs to 630 residues: Replication protein E1 (630 aa).

A disordered region spans residues 26-46 (RKTGDTISDDESEEENETDTD). Positions 32-46 (ISDDESEEENETDTD) are enriched in acidic residues. The short motif at 86–88 (KRK) is the Nuclear localization signal element. Position 92 is a phosphoserine; by host (Ser92). Residues 136 to 166 (EKGNGCGSSQNGGSQNSNCSEHSVSNMDIDT) form a disordered region. A compositionally biased stretch (low complexity) spans 142–155 (GSSQNGGSQNSNCS). Polar residues predominate over residues 156-166 (EHSVSNMDIDT). A DNA-binding region region spans residues 167–333 (NMETPTHQLQ…QTQLQHSLQD (167 aa)). Residues 432 to 582 (VDFISFLSYF…FPLDNNGNPV (151 aa)) enclose the SF3 helicase domain. Residue 458–465 (GPPNTGKS) participates in ATP binding. Lys539 is covalently cross-linked (Glycyl lysine isopeptide (Lys-Gly) (interchain with G-Cter in SUMO)).

The protein belongs to the papillomaviridae E1 protein family. As to quaternary structure, can form hexamers. Interacts with E2 protein; this interaction increases E1 DNA binding specificity. Interacts with host DNA polymerase subunit POLA2. Interacts with host single stranded DNA-binding protein RPA1. Interacts with host TOP1; this interaction stimulates the enzymatic activity of TOP1. Post-translationally, phosphorylated. In terms of processing, sumoylated.

The protein resides in the host nucleus. It carries out the reaction Couples ATP hydrolysis with the unwinding of duplex DNA by translocating in the 3'-5' direction.. It catalyses the reaction ATP + H2O = ADP + phosphate + H(+). Functionally, ATP-dependent DNA 3'-5' helicase required for initiation of viral DNA replication. It forms a complex with the viral E2 protein. The E1-E2 complex binds to the replication origin which contains binding sites for both proteins. During the initial step, a dimer of E1 interacts with a dimer of protein E2 leading to a complex that binds the viral origin of replication with high specificity. Then, a second dimer of E1 displaces the E2 dimer in an ATP-dependent manner to form the E1 tetramer. Following this, two E1 monomers are added to each half of the site, which results in the formation of two E1 trimers on the viral ori. Subsequently, two hexamers will be created. The double hexamer acts as a bi-directional helicase machinery and unwinds the viral DNA and then recruits the host DNA polymerase to start replication. The protein is Replication protein E1 of Homo sapiens (Human).